The primary structure comprises 328 residues: Solute-binding protein Bamb_6123 (328 aa).

The N-terminal stretch at 1–26 (MTHRFPRSRTALAVALMAGFAMSAQA) is a signal peptide. Beta-D-galacturonate contacts are provided by His35, Glu73, Arg89, Arg149, Asn209, and Glu236. Residues His35, Glu73, Arg89, Arg149, Asn209, and Glu236 each contribute to the beta-D-glucuronate site.

This sequence belongs to the bacterial solute-binding protein 7 family. The complex is comprised of an extracytoplasmic solute-binding protein and a heteromeric permease formed by two transmembrane proteins.

It is found in the periplasm. In terms of biological role, solute-binding protein that binds D-galacturonate and D-glucuronate (in vitro). Probably part of a tripartite ATP-independent periplasmic (TRAP) transport system that mediates solute transport into the cytoplasm. The sequence is that of Solute-binding protein Bamb_6123 from Burkholderia ambifaria (strain ATCC BAA-244 / DSM 16087 / CCUG 44356 / LMG 19182 / AMMD) (Burkholderia cepacia (strain AMMD)).